Consider the following 307-residue polypeptide: Agmatinase (307 aa).

His-126, Asp-149, His-151, Asp-153, Asp-230, and Asp-232 together coordinate Mn(2+).

The protein belongs to the arginase family. Agmatinase subfamily. It depends on Mn(2+) as a cofactor.

The catalysed reaction is agmatine + H2O = urea + putrescine. It functions in the pathway amine and polyamine biosynthesis; putrescine biosynthesis via agmatine pathway; putrescine from agmatine: step 1/1. In terms of biological role, catalyzes the formation of putrescine from agmatine. The chain is Agmatinase from Sodalis glossinidius (strain morsitans).